The primary structure comprises 767 residues: Integrin beta-8 (767 aa).

An N-terminal signal peptide occupies residues 1–21; that stretch reads MCGSALAFLTAALLSLHNCQR. Residues 22–681 are Extracellular-facing; sequence GPALVLGAAW…SECLSGPSYL (660 aa). The PSI domain occupies 46-95; the sequence is RCGSANVVSCARCLQLGPECGWCVQEDFVSGGSGSERCDTVSSLISKGCP. 25 disulfides stabilise this stretch: Cys-47–Cys-65, Cys-55–Cys-469, Cys-58–Cys-83, Cys-68–Cys-94, Cys-211–Cys-218, Cys-266–Cys-307, Cys-407–Cys-419, Cys-439–Cys-467, Cys-471–Cys-490, Cys-471–Cys-493, Cys-481–Cys-493, Cys-498–Cys-527, Cys-510–Cys-525, Cys-519–Cys-530, Cys-532–Cys-545, Cys-552–Cys-566, Cys-560–Cys-571, Cys-573–Cys-582, Cys-584–Cys-608, Cys-592–Cys-606, Cys-600–Cys-611, Cys-613–Cys-623, Cys-626–Cys-629, Cys-633–Cys-660, and Cys-639–Cys-656. The VWFA domain maps to 146 to 384; it reads PVDLYYLVDV…NLVVEAYKKI (239 aa). The Mg(2+) site is built by Asp-154 and Ser-156. Asp-193 contacts Ca(2+). Asn-233 carries N-linked (GlcNAc...) asparagine glycosylation. Ca(2+)-binding residues include Asn-249, Asp-251, Pro-253, and Glu-254. Glu-254 provides a ligand contact to Mg(2+). N-linked (GlcNAc...) asparagine glycosylation is present at Asn-402. Asn-421, Asn-431, and Asn-456 each carry an N-linked (GlcNAc...) asparagine glycan. 4 I-EGF domains span residues 471 to 494, 498 to 546, 547 to 583, and 584 to 624; these read CENH…PQCD, CHFD…QYCE, KDDF…DRCQ, and CPSA…RLCE. Asn-647 is a glycosylation site (N-linked (GlcNAc...) asparagine). Residues 682–702 traverse the membrane as a helical segment; the sequence is RIFFIIFIVTFLIGLLKVLII. Over 703-767 the chain is Cytoplasmic; sequence RQVILQWNNN…NAQEAFRCNF (65 aa).

It belongs to the integrin beta chain family. As to quaternary structure, heterodimer of an alpha and a beta subunit. Beta-8 (ITGB8) associates with alpha-V (ITGAV) to form ITGAV:ITGB8. ITGAV:ITGB8 interacts with TGFB1.

The protein resides in the cell membrane. In terms of biological role, integrin alpha-V:beta-8 (ITGAV:ITGB8) is a receptor for fibronectin. It recognizes the sequence R-G-D in its ligands. Integrin alpha-V:beta-6 (ITGAV:ITGB6) mediates R-G-D-dependent release of transforming growth factor beta-1 (TGF-beta-1) from regulatory Latency-associated peptide (LAP), thereby playing a key role in TGF-beta-1 activation on the surface of activated regulatory T-cells (Tregs). Required during vasculogenesis. This Mus musculus (Mouse) protein is Integrin beta-8.